Reading from the N-terminus, the 118-residue chain is Putative membrane protein insertion efficiency factor (118 aa).

It belongs to the UPF0161 family.

The protein resides in the cell inner membrane. Functionally, could be involved in insertion of integral membrane proteins into the membrane. The protein is Putative membrane protein insertion efficiency factor of Helicobacter pylori (strain P12).